The chain runs to 217 residues: MKRTATPDSPALFDLVDTGPDFAFELEAKKKGFWPVAGTDEAGRGPLAGPVVAAAVILDPDNIPKGMDDSKKLTRQKRESLFVQIMETSIVSVASSGPGLIDSVNILRASLDAMRRAVLGLEIPPALVLADGRDRPPGIPCEAKAVIKGDSRSLSIAAASIIAKVTRDRMMERAGVVHTSYGFEGHAGYGTPAHLRAIESHGPCALHRMSFRPLKRD.

An RNase H type-2 domain is found at 34-217 (WPVAGTDEAG…RMSFRPLKRD (184 aa)). A divalent metal cation is bound by residues aspartate 40, glutamate 41, and aspartate 131.

Belongs to the RNase HII family. Mn(2+) is required as a cofactor. Requires Mg(2+) as cofactor.

The protein resides in the cytoplasm. The catalysed reaction is Endonucleolytic cleavage to 5'-phosphomonoester.. Its function is as follows. Endonuclease that specifically degrades the RNA of RNA-DNA hybrids. This chain is Ribonuclease HII, found in Agrobacterium fabrum (strain C58 / ATCC 33970) (Agrobacterium tumefaciens (strain C58)).